Reading from the N-terminus, the 233-residue chain is Zinc import ATP-binding protein ZnuC (233 aa).

The 217-residue stretch at 6-222 (IEFHNVSKKF…SDFSNALSSL (217 aa)) folds into the ABC transporter domain. 38 to 45 (GPNGAGKT) contributes to the ATP binding site.

This sequence belongs to the ABC transporter superfamily. Zinc importer (TC 3.A.1.15.5) family. As to quaternary structure, the complex is composed of two ATP-binding proteins (ZnuC), two transmembrane proteins (ZnuB) and a solute-binding protein (ZnuA).

It is found in the cell inner membrane. It catalyses the reaction Zn(2+)(out) + ATP(in) + H2O(in) = Zn(2+)(in) + ADP(in) + phosphate(in) + H(+)(in). In terms of biological role, part of the ABC transporter complex ZnuABC involved in zinc import. Responsible for energy coupling to the transport system. This is Zinc import ATP-binding protein ZnuC from Rickettsia bellii (strain RML369-C).